We begin with the raw amino-acid sequence, 348 residues long: Phosphate acyltransferase (348 aa).

Belongs to the PlsX family. Homodimer. Probably interacts with PlsY.

It is found in the cytoplasm. The catalysed reaction is a fatty acyl-[ACP] + phosphate = an acyl phosphate + holo-[ACP]. Its pathway is lipid metabolism; phospholipid metabolism. In terms of biological role, catalyzes the reversible formation of acyl-phosphate (acyl-PO(4)) from acyl-[acyl-carrier-protein] (acyl-ACP). This enzyme utilizes acyl-ACP as fatty acyl donor, but not acyl-CoA. This is Phosphate acyltransferase from Rhizobium leguminosarum bv. trifolii (strain WSM2304).